The primary structure comprises 215 residues: FGFR1 oncogene partner 2 homolog (215 aa).

A coiled-coil region spans residues 35–183 (LLNKRVEAMK…SGLRELLGIS (149 aa)).

The protein belongs to the SIKE family.

It localises to the cytoplasm. The chain is FGFR1 oncogene partner 2 homolog (fgfr1op2) from Danio rerio (Zebrafish).